The following is a 58-amino-acid chain: uncharacterized protein (58 aa).

2 disordered regions span residues 1 to 20 (MKKN…MNKK) and 38 to 58 (IIET…KKQQ).

This is an uncharacterized protein from Bacillus subtilis (strain 168).